A 594-amino-acid polypeptide reads, in one-letter code: CTP synthase (594 aa).

The tract at residues 1–272 is amidoligase domain; the sequence is MARPKNVKYV…DLRVLKKLGL (272 aa). Residue S18 participates in CTP binding. Residue S18 participates in UTP binding. 19-24 is a binding site for ATP; sequence SLGKGI. Y59 is an L-glutamine binding site. ATP is bound at residue D76. Positions 76 and 146 each coordinate Mg(2+). Residues 153–155, 193–198, and K229 contribute to the CTP site; these read DIE and KTKPTQ. UTP is bound by residues 193-198 and K229; that span reads KTKPTQ. The 245-residue stretch at 299-543 folds into the Glutamine amidotransferase type-1 domain; the sequence is TIVVCGKYTE…VGAAKSYAAV (245 aa). G363 is an L-glutamine binding site. C390 functions as the Nucleophile; for glutamine hydrolysis in the catalytic mechanism. L-glutamine-binding positions include 391-394, E414, and R471; that span reads LGMQ. Residues H516 and E518 contribute to the active site. Residues 562-571 are compositionally biased toward low complexity; sequence AEAYAAYSEE. A disordered region spans residues 562-594; it reads AEAYAAYSEESSAESKSFFPDNGGHDEERDSGQ. The span at 584–594 shows a compositional bias: basic and acidic residues; sequence GGHDEERDSGQ.

The protein belongs to the CTP synthase family. In terms of assembly, homotetramer.

It catalyses the reaction UTP + L-glutamine + ATP + H2O = CTP + L-glutamate + ADP + phosphate + 2 H(+). The enzyme catalyses L-glutamine + H2O = L-glutamate + NH4(+). It carries out the reaction UTP + NH4(+) + ATP = CTP + ADP + phosphate + 2 H(+). The protein operates within pyrimidine metabolism; CTP biosynthesis via de novo pathway; CTP from UDP: step 2/2. Allosterically activated by GTP, when glutamine is the substrate; GTP has no effect on the reaction when ammonia is the substrate. The allosteric effector GTP functions by stabilizing the protein conformation that binds the tetrahedral intermediate(s) formed during glutamine hydrolysis. Inhibited by the product CTP, via allosteric rather than competitive inhibition. Its function is as follows. Catalyzes the ATP-dependent amination of UTP to CTP with either L-glutamine or ammonia as the source of nitrogen. Regulates intracellular CTP levels through interactions with the four ribonucleotide triphosphates. This Chlorobium phaeovibrioides (strain DSM 265 / 1930) (Prosthecochloris vibrioformis (strain DSM 265)) protein is CTP synthase.